A 119-amino-acid polypeptide reads, in one-letter code: Large ribosomal subunit protein uL24 (119 aa).

The protein belongs to the universal ribosomal protein uL24 family. As to quaternary structure, part of the 50S ribosomal subunit.

One of two assembly initiator proteins, it binds directly to the 5'-end of the 23S rRNA, where it nucleates assembly of the 50S subunit. Functionally, one of the proteins that surrounds the polypeptide exit tunnel on the outside of the subunit. This Paenarthrobacter aurescens (strain TC1) protein is Large ribosomal subunit protein uL24.